Consider the following 186-residue polypeptide: Small ribosomal subunit protein uS5 (186 aa).

The S5 DRBM domain occupies 20–83 (FVDKLVHINR…EAAKRDMIFV (64 aa)).

Belongs to the universal ribosomal protein uS5 family. As to quaternary structure, part of the 30S ribosomal subunit. Contacts proteins S4 and S8.

Its function is as follows. With S4 and S12 plays an important role in translational accuracy. Located at the back of the 30S subunit body where it stabilizes the conformation of the head with respect to the body. The polypeptide is Small ribosomal subunit protein uS5 (Brucella anthropi (strain ATCC 49188 / DSM 6882 / CCUG 24695 / JCM 21032 / LMG 3331 / NBRC 15819 / NCTC 12168 / Alc 37) (Ochrobactrum anthropi)).